We begin with the raw amino-acid sequence, 552 residues long: Membrane protein insertase YidC (552 aa).

Helical transmembrane passes span 7–24, 364–384, 434–454, 473–493, and 508–528; these read VLWV…DNWQ, WGWA…PLSA, LPVV…LASV, PFFI…SLNP, and PIAF…YYVV.

It belongs to the OXA1/ALB3/YidC family. Type 1 subfamily. In terms of assembly, interacts with the Sec translocase complex via SecD. Specifically interacts with transmembrane segments of nascent integral membrane proteins during membrane integration.

The protein localises to the cell inner membrane. In terms of biological role, required for the insertion and/or proper folding and/or complex formation of integral membrane proteins into the membrane. Involved in integration of membrane proteins that insert both dependently and independently of the Sec translocase complex, as well as at least some lipoproteins. Aids folding of multispanning membrane proteins. In Burkholderia cenocepacia (strain ATCC BAA-245 / DSM 16553 / LMG 16656 / NCTC 13227 / J2315 / CF5610) (Burkholderia cepacia (strain J2315)), this protein is Membrane protein insertase YidC.